Reading from the N-terminus, the 273-residue chain is Formamidopyrimidine-DNA glycosylase (273 aa).

Residue P2 is the Schiff-base intermediate with DNA of the active site. E3 functions as the Proton donor in the catalytic mechanism. K58 functions as the Proton donor; for beta-elimination activity in the catalytic mechanism. DNA contacts are provided by H91 and R110. The segment at 238–272 (QVYGKTGQPCPRCGCLIKKIKVGGRGTHYCPRCQC) adopts an FPG-type zinc-finger fold. The active-site Proton donor; for delta-elimination activity is R262.

This sequence belongs to the FPG family. As to quaternary structure, monomer. Requires Zn(2+) as cofactor.

It carries out the reaction Hydrolysis of DNA containing ring-opened 7-methylguanine residues, releasing 2,6-diamino-4-hydroxy-5-(N-methyl)formamidopyrimidine.. The catalysed reaction is 2'-deoxyribonucleotide-(2'-deoxyribose 5'-phosphate)-2'-deoxyribonucleotide-DNA = a 3'-end 2'-deoxyribonucleotide-(2,3-dehydro-2,3-deoxyribose 5'-phosphate)-DNA + a 5'-end 5'-phospho-2'-deoxyribonucleoside-DNA + H(+). Functionally, involved in base excision repair of DNA damaged by oxidation or by mutagenic agents. Acts as a DNA glycosylase that recognizes and removes damaged bases. Has a preference for oxidized purines, such as 7,8-dihydro-8-oxoguanine (8-oxoG). Has AP (apurinic/apyrimidinic) lyase activity and introduces nicks in the DNA strand. Cleaves the DNA backbone by beta-delta elimination to generate a single-strand break at the site of the removed base with both 3'- and 5'-phosphates. The sequence is that of Formamidopyrimidine-DNA glycosylase from Streptococcus agalactiae serotype Ia (strain ATCC 27591 / A909 / CDC SS700).